Here is a 603-residue protein sequence, read N- to C-terminus: Cell division control protein 48 homolog B (603 aa).

ATP is bound by residues 63–70 (GPPGTGKT) and 327–334 (GPPGCSKT).

The protein belongs to the AAA ATPase family.

It localises to the nucleus. It is found in the cytoplasm. The protein localises to the cytoskeleton. Its subcellular location is the phragmoplast. In terms of biological role, probably functions in cell division and growth processes. Interacts with certain SNAREs as part of specialized membrane fusion events where vesicles from the same organelle fuse (homotypic fusion). This is Cell division control protein 48 homolog B (CDC48B) from Arabidopsis thaliana (Mouse-ear cress).